A 380-amino-acid polypeptide reads, in one-letter code: uncharacterized protein (380 aa).

The next 9 membrane-spanning stretches (helical) occupy residues Leu-15 to Pro-35, Leu-45 to Phe-65, Ile-75 to Thr-95, Leu-98 to Phe-118, Ile-123 to Tyr-143, Ile-182 to Ile-202, Met-217 to Leu-237, Gly-303 to Ile-323, and Leu-341 to Leu-361.

It is found in the cell membrane. This is an uncharacterized protein from Methanocaldococcus jannaschii (strain ATCC 43067 / DSM 2661 / JAL-1 / JCM 10045 / NBRC 100440) (Methanococcus jannaschii).